The sequence spans 428 residues: Serine--tRNA ligase (428 aa).

Position 231–233 (231–233 (TAE)) interacts with L-serine. 262-264 (RAE) is a binding site for ATP. Glu285 contacts L-serine. 349–352 (EISS) contacts ATP. Residue Ser385 participates in L-serine binding.

Belongs to the class-II aminoacyl-tRNA synthetase family. Type-1 seryl-tRNA synthetase subfamily. In terms of assembly, homodimer. The tRNA molecule binds across the dimer.

The protein localises to the cytoplasm. The catalysed reaction is tRNA(Ser) + L-serine + ATP = L-seryl-tRNA(Ser) + AMP + diphosphate + H(+). It carries out the reaction tRNA(Sec) + L-serine + ATP = L-seryl-tRNA(Sec) + AMP + diphosphate + H(+). Its pathway is aminoacyl-tRNA biosynthesis; selenocysteinyl-tRNA(Sec) biosynthesis; L-seryl-tRNA(Sec) from L-serine and tRNA(Sec): step 1/1. Catalyzes the attachment of serine to tRNA(Ser). Is also able to aminoacylate tRNA(Sec) with serine, to form the misacylated tRNA L-seryl-tRNA(Sec), which will be further converted into selenocysteinyl-tRNA(Sec). In Methylorubrum extorquens (strain CM4 / NCIMB 13688) (Methylobacterium extorquens), this protein is Serine--tRNA ligase.